The following is a 74-amino-acid chain: Protein SlyX homolog (74 aa).

The segment at 52 to 74 (LKQMQENQSTDSDPADEPPPPHY) is disordered.

Belongs to the SlyX family.

The polypeptide is Protein SlyX homolog (Idiomarina loihiensis (strain ATCC BAA-735 / DSM 15497 / L2-TR)).